The following is a 440-amino-acid chain: Signal recognition particle 54 kDa protein (440 aa).

GTP contacts are provided by residues 104–111 (GLQGSGKT), 184–188 (DTAGR), and 242–245 (TKLD).

This sequence belongs to the GTP-binding SRP family. SRP54 subfamily. In terms of assembly, part of the signal recognition particle protein translocation system, which is composed of SRP and FtsY. Archaeal SRP consists of a 7S RNA molecule of 300 nucleotides and two protein subunits: SRP54 and SRP19.

The protein resides in the cytoplasm. It carries out the reaction GTP + H2O = GDP + phosphate + H(+). Its function is as follows. Involved in targeting and insertion of nascent membrane proteins into the cytoplasmic membrane. Binds to the hydrophobic signal sequence of the ribosome-nascent chain (RNC) as it emerges from the ribosomes. The SRP-RNC complex is then targeted to the cytoplasmic membrane where it interacts with the SRP receptor FtsY. The chain is Signal recognition particle 54 kDa protein from Methanosarcina acetivorans (strain ATCC 35395 / DSM 2834 / JCM 12185 / C2A).